A 126-amino-acid chain; its full sequence is Antimicrobial protein 1 (126 aa).

The N-terminal stretch at Met1–Ala24 is a signal peptide.

Strongly expressed in gills, hemocytes and reproductive tract, with weaker expression in muscle, heart and digestive tract. Not detected in eyes and hepatopancreas (at protein level).

It is found in the secreted. In terms of biological role, has antibacterial activity against the Gram-positive bacteria E.coli (MIC&lt;50 ug/ml) and P.aeruginosa (MIC&lt;25 ug/ml), and the Gram-negative bacteria S.aureus (MIC&lt;100 ug/ml) and S.pyogenes (MIC&lt;50 ug/ml). The chain is Antimicrobial protein 1 from Scylla serrata (Mud crab).